The sequence spans 382 residues: MYIAGVMSGTSLDGIDVALVRIEGSGVDSKVKLIHFTTVPFCNDIKSEIQQALSIENSNVQLICSLNFKLGLCFANAVKEVCKEANFSLEQLDLIGSHGQTIYHQPKPEGNMIASTLQIGEPAVIAYDTNTTVISNFRTMDMAAGGQGAPLVPYSEVILYRDPSKNRLLQNIGGIGNVTVIPSQKSDQNVIAFDTGPGNMIIDEVCQRLFQLPYDQNGEIAEQGEVVDEILTYCMNHPFLKMNPPKSTGREQFGEEFVSQLLKRYEKYSKENILTTVTMFTASSIVYHYKEFILPYYEIAEVILGGGGSYNDTLVEMIRYGLKDEKCTIFIQEDIGYSSEAKEAIAFAILANETYHRNPSNVPSATGAKKSVVLGNVTYPSI.

9-16 is an ATP binding site; the sequence is GTSLDGID.

It belongs to the anhydro-N-acetylmuramic acid kinase family.

The enzyme catalyses 1,6-anhydro-N-acetyl-beta-muramate + ATP + H2O = N-acetyl-D-muramate 6-phosphate + ADP + H(+). The protein operates within amino-sugar metabolism; 1,6-anhydro-N-acetylmuramate degradation. It functions in the pathway cell wall biogenesis; peptidoglycan recycling. Catalyzes the specific phosphorylation of 1,6-anhydro-N-acetylmuramic acid (anhMurNAc) with the simultaneous cleavage of the 1,6-anhydro ring, generating MurNAc-6-P. Is required for the utilization of anhMurNAc either imported from the medium or derived from its own cell wall murein, and thus plays a role in cell wall recycling. This chain is Anhydro-N-acetylmuramic acid kinase, found in Bacillus cereus (strain AH187).